The chain runs to 250 residues: Cobalt transport protein CbiM (250 aa).

The signal sequence occupies residues Met1–Ala24. The next 6 helical transmembrane spans lie at Leu32–Ile52, Met67–Val87, Leu99–Phe119, Leu122–Met142, Val161–Gln181, and Ile203–Phe223.

This sequence belongs to the CbiM family. Forms an energy-coupling factor (ECF) transporter complex composed of an ATP-binding protein (A component, CbiO), a transmembrane protein (T component, CbiQ) and 2 possible substrate-capture proteins (S components, CbiM and CbiN) of unknown stoichimetry.

Its subcellular location is the cell membrane. It participates in cofactor biosynthesis; adenosylcobalamin biosynthesis. Functionally, part of the energy-coupling factor (ECF) transporter complex CbiMNOQ involved in cobalt import. In Desulforamulus reducens (strain ATCC BAA-1160 / DSM 100696 / MI-1) (Desulfotomaculum reducens), this protein is Cobalt transport protein CbiM.